The following is a 242-amino-acid chain: Large ribosomal subunit protein uL1 (242 aa).

The protein belongs to the universal ribosomal protein uL1 family. As to quaternary structure, part of the 50S ribosomal subunit.

Its function is as follows. Binds directly to 23S rRNA. The L1 stalk is quite mobile in the ribosome, and is involved in E site tRNA release. In terms of biological role, protein L1 is also a translational repressor protein, it controls the translation of the L11 operon by binding to its mRNA. In Dictyoglomus thermophilum (strain ATCC 35947 / DSM 3960 / H-6-12), this protein is Large ribosomal subunit protein uL1.